The sequence spans 378 residues: Beta-1,3-galactosyltransferase pvg3 (378 aa).

Over 1-8 (MFSNSKKK) the chain is Cytoplasmic. Residues 9–29 (IFLYVLIAGVATFSFAFLVLN) traverse the membrane as a helical; Signal-anchor for type II membrane protein segment. Residues 30 to 378 (RLQAEEHSLA…ATIPLPSLDV (349 aa)) are Lumenal-facing. Asn53, Asn97, Asn180, and Asn354 each carry an N-linked (GlcNAc...) asparagine glycan.

The protein belongs to the glycosyltransferase 31 family.

Its subcellular location is the endoplasmic reticulum membrane. The protein resides in the golgi apparatus. The protein localises to the golgi stack membrane. The enzyme catalyses 3-O-(beta-D-galactosyl-(1-&gt;4)-beta-D-xylosyl)-L-seryl-[protein] + UDP-alpha-D-galactose = 3-O-(beta-D-galactosyl-(1-&gt;3)-beta-D-galactosyl-(1-&gt;4)-beta-D-xylosyl)-L-seryl-[protein] + UDP + H(+). Functionally, involved in cell wall biogenesis. Has a role in the addition of Gal-beta1,3 moeities to galactomannans and their subsequent pyruvylation. Has a role in meiosis. The protein is Beta-1,3-galactosyltransferase pvg3 (pvg3) of Schizosaccharomyces pombe (strain 972 / ATCC 24843) (Fission yeast).